The following is a 281-amino-acid chain: NADH-cytochrome b5 reductase 1 (281 aa).

Residues 2-22 (VPGKFIFTATFVLLCTIIAVV) traverse the membrane as a helical segment. One can recognise an FAD-binding FR-type domain in the interval 37–141 (EKLQEFPLVA…RGPKGFYHYQ (105 aa)). FAD-binding positions include 121 to 136 (AQLN…GPKG) and 147 to 179 (EIGM…KVSL).

Belongs to the flavoprotein pyridine nucleotide cytochrome reductase family. In terms of assembly, monomer. Component of the 2-(3-amino-3-carboxypropyl)histidine synthase complex composed of DPH1, DPH2, DPH3 and a NADH-dependent reductase, predominantly CBR1. It depends on FAD as a cofactor.

It is found in the mitochondrion outer membrane. The enzyme catalyses 2 Fe(III)-[cytochrome b5] + NADH = 2 Fe(II)-[cytochrome b5] + NAD(+) + H(+). It catalyses the reaction 2 Fe(3+)-[Dph3] + NADH = 2 Fe(2+)-[Dph3] + NAD(+) + H(+). It participates in protein modification; peptidyl-diphthamide biosynthesis. NADH-dependent reductase for DPH3 and cytochrome b5. Required for the first step of diphthamide biosynthesis, a post-translational modification of histidine which occurs in elongation factor 2. DPH1 and DPH2 transfer a 3-amino-3-carboxypropyl (ACP) group from S-adenosyl-L-methionine (SAM) to a histidine residue, the reaction is assisted by a reduction system comprising DPH3 and a NADH-dependent reductase, predominantly CBR1. By reducing DPH3, also involved in the formation of the tRNA wobble base modification mcm5s 2U (5-methoxycarbonylmethyl-2-thiouridine), mediated by the elongator complex. The cytochrome b5/NADH cytochrome b5 reductase electron transfer system supports the catalytic activity of several sterol biosynthetic enzymes. The sequence is that of NADH-cytochrome b5 reductase 1 (CBR1) from Kluyveromyces lactis (strain ATCC 8585 / CBS 2359 / DSM 70799 / NBRC 1267 / NRRL Y-1140 / WM37) (Yeast).